We begin with the raw amino-acid sequence, 401 residues long: Argininosuccinate synthase (401 aa).

9–17 (AYSGGLDTS) contacts ATP. Residue Tyr-86 participates in L-citrulline binding. Gly-116 is a binding site for ATP. Positions 118, 122, and 123 each coordinate L-aspartate. Residue Asn-122 coordinates L-citrulline. Arg-126, Ser-174, Ser-183, Glu-259, and Tyr-271 together coordinate L-citrulline.

The protein belongs to the argininosuccinate synthase family. Type 1 subfamily. In terms of assembly, homotetramer.

It localises to the cytoplasm. It carries out the reaction L-citrulline + L-aspartate + ATP = 2-(N(omega)-L-arginino)succinate + AMP + diphosphate + H(+). It functions in the pathway amino-acid biosynthesis; L-arginine biosynthesis; L-arginine from L-ornithine and carbamoyl phosphate: step 2/3. The protein is Argininosuccinate synthase of Bacillus anthracis (strain A0248).